Here is a 139-residue protein sequence, read N- to C-terminus: Large ribosomal subunit protein uL13 (139 aa).

It belongs to the universal ribosomal protein uL13 family. In terms of assembly, part of the 50S ribosomal subunit.

This protein is one of the early assembly proteins of the 50S ribosomal subunit, although it is not seen to bind rRNA by itself. It is important during the early stages of 50S assembly. The chain is Large ribosomal subunit protein uL13 from Methanococcoides burtonii (strain DSM 6242 / NBRC 107633 / OCM 468 / ACE-M).